Here is a 261-residue protein sequence, read N- to C-terminus: Imidazole glycerol phosphate synthase subunit HisF (261 aa).

Active-site residues include D11 and D130.

The protein belongs to the HisA/HisF family. As to quaternary structure, heterodimer of HisH and HisF.

It is found in the cytoplasm. It catalyses the reaction 5-[(5-phospho-1-deoxy-D-ribulos-1-ylimino)methylamino]-1-(5-phospho-beta-D-ribosyl)imidazole-4-carboxamide + L-glutamine = D-erythro-1-(imidazol-4-yl)glycerol 3-phosphate + 5-amino-1-(5-phospho-beta-D-ribosyl)imidazole-4-carboxamide + L-glutamate + H(+). It functions in the pathway amino-acid biosynthesis; L-histidine biosynthesis; L-histidine from 5-phospho-alpha-D-ribose 1-diphosphate: step 5/9. Its function is as follows. IGPS catalyzes the conversion of PRFAR and glutamine to IGP, AICAR and glutamate. The HisF subunit catalyzes the cyclization activity that produces IGP and AICAR from PRFAR using the ammonia provided by the HisH subunit. This chain is Imidazole glycerol phosphate synthase subunit HisF, found in Jannaschia sp. (strain CCS1).